A 418-amino-acid chain; its full sequence is Serine--tRNA ligase (418 aa).

L-serine is bound at residue 227–229 (TSE). ATP-binding positions include 258 to 260 (RRE) and Val274. Glu281 is an L-serine binding site. ATP is bound at residue 345–348 (ELTS). L-serine is bound at residue Thr380.

It belongs to the class-II aminoacyl-tRNA synthetase family. Type-1 seryl-tRNA synthetase subfamily. As to quaternary structure, homodimer. The tRNA molecule binds across the dimer.

Its subcellular location is the cytoplasm. The enzyme catalyses tRNA(Ser) + L-serine + ATP = L-seryl-tRNA(Ser) + AMP + diphosphate + H(+). It catalyses the reaction tRNA(Sec) + L-serine + ATP = L-seryl-tRNA(Sec) + AMP + diphosphate + H(+). It participates in aminoacyl-tRNA biosynthesis; selenocysteinyl-tRNA(Sec) biosynthesis; L-seryl-tRNA(Sec) from L-serine and tRNA(Sec): step 1/1. Functionally, catalyzes the attachment of serine to tRNA(Ser). Is also able to aminoacylate tRNA(Sec) with serine, to form the misacylated tRNA L-seryl-tRNA(Sec), which will be further converted into selenocysteinyl-tRNA(Sec). This Rhodococcus jostii (strain RHA1) protein is Serine--tRNA ligase.